The following is an 851-amino-acid chain: UPF0508 protein CAGL0M08074g (851 aa).

This sequence belongs to the UPF0508 family.

The sequence is that of UPF0508 protein CAGL0M08074g from Candida glabrata (strain ATCC 2001 / BCRC 20586 / JCM 3761 / NBRC 0622 / NRRL Y-65 / CBS 138) (Yeast).